The sequence spans 243 residues: Carboxy-S-adenosyl-L-methionine synthase (243 aa).

S-adenosyl-L-methionine-binding positions include Y40, 65-67 (GCS), 90-91 (DN), 118-119 (DI), N133, and R200.

This sequence belongs to the class I-like SAM-binding methyltransferase superfamily. Cx-SAM synthase family. As to quaternary structure, homodimer.

The enzyme catalyses prephenate + S-adenosyl-L-methionine = carboxy-S-adenosyl-L-methionine + 3-phenylpyruvate + H2O. In terms of biological role, catalyzes the conversion of S-adenosyl-L-methionine (SAM) to carboxy-S-adenosyl-L-methionine (Cx-SAM). This Shewanella putrefaciens (strain CN-32 / ATCC BAA-453) protein is Carboxy-S-adenosyl-L-methionine synthase.